The chain runs to 6919 residues: Nonribosomal peptide synthetase easA (6919 aa).

The 77-residue stretch at 17 to 93 (TNNEVVEKDI…ELCQSVKLAE (77 aa)) folds into the Carrier 1 domain. Ser-54 carries the O-(pantetheine 4'-phosphoryl)serine modification. The epimerization 1 stretch occupies residues 123-427 (EAQKLYASTK…FLRKVKDTRM (305 aa)). The disordered stretch occupies residues 294-319 (FRRSTPVESTNDERNTNERQHNRHQN). Over residues 304–319 (NDERNTNERQHNRHQN) the composition is skewed to basic and acidic residues. The condensation 1 stretch occupies residues 604–981 (LNVELDCGRL…ISTTQEINQL (378 aa)). Residues 1003–1394 (QRLRRPDAWA…GRRDTQIKVR (392 aa)) are adenylation 1. Residues 1531 to 1608 (EPETLLERQV…QLAQTAEVKD (78 aa)) form the Carrier 2 domain. O-(pantetheine 4'-phosphoryl)serine is present on Ser-1569. The tract at residues 1617–2031 (LLSPMQKWYF…ANAISALGTE (415 aa)) is epimerization 2. The segment at 2072 to 2509 (VEDIYPCSPI…VGQLNTVTPK (438 aa)) is condensation 2. The segment at 2541–2930 (RPNATAVCAW…ARKDSQVKVR (390 aa)) is adenylation 2. The Carrier 3 domain occupies 3067-3143 (APSTFMEKKL…EMAAHLEAQM (77 aa)). At Ser-3104 the chain carries O-(pantetheine 4'-phosphoryl)serine. Positions 3188-3599 (EDVYPCTPLQ…LLSKDEARRL (412 aa)) are condensation 3. An adenylation 3 region spans residues 3620 to 4018 (QHVSTNPYAP…GRRDGQVKIR (399 aa)). Positions 4151-4228 (TPSTSEEKNI…QLAKKAVIKT (78 aa)) constitute a Carrier 4 domain. Ser-4188 is modified (O-(pantetheine 4'-phosphoryl)serine). A condensation 4 region spans residues 4282 to 4708 (ESIYYCSPIQ…EIDVIPTGDV (427 aa)). Positions 4732 to 5133 (EQALSQPGAQ…GRADGQIKIR (402 aa)) are adenylation 4. The 78-residue stretch at 5260–5337 (ALSTETERRL…DMANTIANSE (78 aa)) folds into the Carrier 5 domain. Ser-5296 carries the O-(pantetheine 4'-phosphoryl)serine modification. A condensation 5 region spans residues 5380–5775 (EDAYPCTPLQ…VFGQLQSAAN (396 aa)). The segment at 5824-6216 (SCPDAQAVHA…IGRRDTQVKI (393 aa)) is adenylation 5. A Carrier 6 domain is found at 6344–6421 (EPATVTERLL…DMATLIDRKT (78 aa)). Ser-6381 is subject to O-(pantetheine 4'-phosphoryl)serine.

Its pathway is antibiotic biosynthesis. Functionally, nonribosomal peptide synthetase; part of the gene cluster that mediates the biosynthesis of emericellamides, secondary metabolites acting as antibiotics. The biosynthesis of emericellamides initiates from the highly reducing polyketide synthase easB which catalyzes the formation of the linear polyketide chain. EasB produces several polyketides that can be further processed by the downstream enzymes. The polyketides are released from easB as linear polyketide carboxylic acids, which are converted to CoA thioesters by the acyl-CoA ligase easD. The substrates are then loaded onto the acyltransferase easC, which shuttles them to the first thiolation (T) domain of the nonribosomal peptide synthetase easA. EasA then performs condensation of the polyketides with one glycine, two alanine, one valine and one leucine residues. A last step of cyclization leads to the production of emericellamides. The polypeptide is Nonribosomal peptide synthetase easA (Emericella nidulans (strain FGSC A4 / ATCC 38163 / CBS 112.46 / NRRL 194 / M139) (Aspergillus nidulans)).